The chain runs to 35 residues: Photosystem II reaction center protein T (35 aa).

A helical membrane pass occupies residues 3–23; it reads ALVYTFLLVSTLGIIFFAIFF.

The protein belongs to the PsbT family. In terms of assembly, PSII is composed of 1 copy each of membrane proteins PsbA, PsbB, PsbC, PsbD, PsbE, PsbF, PsbH, PsbI, PsbJ, PsbK, PsbL, PsbM, PsbT, PsbY, PsbZ, Psb30/Ycf12, at least 3 peripheral proteins of the oxygen-evolving complex and a large number of cofactors. It forms dimeric complexes.

The protein localises to the plastid. Its subcellular location is the chloroplast thylakoid membrane. In terms of biological role, found at the monomer-monomer interface of the photosystem II (PS II) dimer, plays a role in assembly and dimerization of PSII. PSII is a light-driven water plastoquinone oxidoreductase, using light energy to abstract electrons from H(2)O, generating a proton gradient subsequently used for ATP formation. The chain is Photosystem II reaction center protein T from Stewartia pseudocamellia (Japanese stewartia).